The following is a 555-amino-acid chain: Chaperonin GroEL 2 (555 aa).

ATP contacts are provided by residues 29–32, 86–90, Gly-414, 480–482, and Asp-496; these read TLGP, DGTTT, and NAL.

Belongs to the chaperonin (HSP60) family. As to quaternary structure, forms a cylinder of 14 subunits composed of two heptameric rings stacked back-to-back. Interacts with the co-chaperonin GroES.

Its subcellular location is the cytoplasm. The catalysed reaction is ATP + H2O + a folded polypeptide = ADP + phosphate + an unfolded polypeptide.. Functionally, together with its co-chaperonin GroES, plays an essential role in assisting protein folding. The GroEL-GroES system forms a nano-cage that allows encapsulation of the non-native substrate proteins and provides a physical environment optimized to promote and accelerate protein folding. This is Chaperonin GroEL 2 from Synechococcus sp. (strain ATCC 27144 / PCC 6301 / SAUG 1402/1) (Anacystis nidulans).